Consider the following 346-residue polypeptide: Holliday junction branch migration complex subunit RuvB (346 aa).

The segment at 1–182 (MSEAARLIAP…FGIPVRLNFY (182 aa)) is large ATPase domain (RuvB-L). Residues L21, R22, G63, K66, T67, T68, 129 to 131 (EDF), R172, Y182, and R219 each bind ATP. T67 contributes to the Mg(2+) binding site. Positions 183–253 (TVEELELIVR…IADEALTRLL (71 aa)) are small ATPAse domain (RuvB-S). Residues 256–346 (SMGLDQLDRR…SQFRLTLEDD (91 aa)) are head domain (RuvB-H). DNA contacts are provided by R292, R311, and R316.

This sequence belongs to the RuvB family. As to quaternary structure, homohexamer. Forms an RuvA(8)-RuvB(12)-Holliday junction (HJ) complex. HJ DNA is sandwiched between 2 RuvA tetramers; dsDNA enters through RuvA and exits via RuvB. An RuvB hexamer assembles on each DNA strand where it exits the tetramer. Each RuvB hexamer is contacted by two RuvA subunits (via domain III) on 2 adjacent RuvB subunits; this complex drives branch migration. In the full resolvosome a probable DNA-RuvA(4)-RuvB(12)-RuvC(2) complex forms which resolves the HJ.

It localises to the cytoplasm. It catalyses the reaction ATP + H2O = ADP + phosphate + H(+). Its function is as follows. The RuvA-RuvB-RuvC complex processes Holliday junction (HJ) DNA during genetic recombination and DNA repair, while the RuvA-RuvB complex plays an important role in the rescue of blocked DNA replication forks via replication fork reversal (RFR). RuvA specifically binds to HJ cruciform DNA, conferring on it an open structure. The RuvB hexamer acts as an ATP-dependent pump, pulling dsDNA into and through the RuvAB complex. RuvB forms 2 homohexamers on either side of HJ DNA bound by 1 or 2 RuvA tetramers; 4 subunits per hexamer contact DNA at a time. Coordinated motions by a converter formed by DNA-disengaged RuvB subunits stimulates ATP hydrolysis and nucleotide exchange. Immobilization of the converter enables RuvB to convert the ATP-contained energy into a lever motion, pulling 2 nucleotides of DNA out of the RuvA tetramer per ATP hydrolyzed, thus driving DNA branch migration. The RuvB motors rotate together with the DNA substrate, which together with the progressing nucleotide cycle form the mechanistic basis for DNA recombination by continuous HJ branch migration. Branch migration allows RuvC to scan DNA until it finds its consensus sequence, where it cleaves and resolves cruciform DNA. This is Holliday junction branch migration complex subunit RuvB from Sinorhizobium medicae (strain WSM419) (Ensifer medicae).